A 512-amino-acid polypeptide reads, in one-letter code: Maturase K (512 aa).

This sequence belongs to the intron maturase 2 family. MatK subfamily.

It localises to the plastid. It is found in the chloroplast. In terms of biological role, usually encoded in the trnK tRNA gene intron. Probably assists in splicing its own and other chloroplast group II introns. The polypeptide is Maturase K (Koelreuteria paniculata (Goldenrain tree)).